The primary structure comprises 253 residues: 5'/3'-nucleotidase SurE (253 aa).

A divalent metal cation-binding residues include Asp8, Asp9, Ser39, and Asn92.

Belongs to the SurE nucleotidase family. The cofactor is a divalent metal cation.

It is found in the cytoplasm. The enzyme catalyses a ribonucleoside 5'-phosphate + H2O = a ribonucleoside + phosphate. It catalyses the reaction a ribonucleoside 3'-phosphate + H2O = a ribonucleoside + phosphate. The catalysed reaction is [phosphate](n) + H2O = [phosphate](n-1) + phosphate + H(+). In terms of biological role, nucleotidase with a broad substrate specificity as it can dephosphorylate various ribo- and deoxyribonucleoside 5'-monophosphates and ribonucleoside 3'-monophosphates with highest affinity to 3'-AMP. Also hydrolyzes polyphosphate (exopolyphosphatase activity) with the preference for short-chain-length substrates (P20-25). Might be involved in the regulation of dNTP and NTP pools, and in the turnover of 3'-mononucleotides produced by numerous intracellular RNases (T1, T2, and F) during the degradation of various RNAs. The protein is 5'/3'-nucleotidase SurE of Salmonella arizonae (strain ATCC BAA-731 / CDC346-86 / RSK2980).